The following is a 438-amino-acid chain: Ribosomal protein uS12 methylthiotransferase RimO (438 aa).

Residues 4–114 form the MTTase N-terminal domain; it reads PRVSFVSLGC…VMNAVHEVAP (111 aa). [4Fe-4S] cluster contacts are provided by Cys13, Cys49, Cys78, Cys146, Cys150, and Cys153. A Radical SAM core domain is found at 132–370; that stretch reads LTPRHYAYLK…MAKQQQISTN (239 aa). The TRAM domain occupies 373-438; it reads KKKVGKRLPV…DAYDLHGTAV (66 aa).

It belongs to the methylthiotransferase family. RimO subfamily. [4Fe-4S] cluster is required as a cofactor.

Its subcellular location is the cytoplasm. It carries out the reaction L-aspartate(89)-[ribosomal protein uS12]-hydrogen + (sulfur carrier)-SH + AH2 + 2 S-adenosyl-L-methionine = 3-methylsulfanyl-L-aspartate(89)-[ribosomal protein uS12]-hydrogen + (sulfur carrier)-H + 5'-deoxyadenosine + L-methionine + A + S-adenosyl-L-homocysteine + 2 H(+). Functionally, catalyzes the methylthiolation of an aspartic acid residue of ribosomal protein uS12. In Brucella ovis (strain ATCC 25840 / 63/290 / NCTC 10512), this protein is Ribosomal protein uS12 methylthiotransferase RimO.